Here is a 294-residue protein sequence, read N- to C-terminus: Cytidine deaminase (294 aa).

CMP/dCMP-type deaminase domains lie at 48 to 168 and 187 to 294; these read DDDA…FGPT and AETD…RVTF. 89–91 is a substrate binding site; the sequence is NME. Residue histidine 102 participates in Zn(2+) binding. Residue glutamate 104 is the Proton donor of the active site. Positions 129 and 132 each coordinate Zn(2+).

The protein belongs to the cytidine and deoxycytidylate deaminase family. Homodimer. Zn(2+) is required as a cofactor.

The enzyme catalyses cytidine + H2O + H(+) = uridine + NH4(+). It catalyses the reaction 2'-deoxycytidine + H2O + H(+) = 2'-deoxyuridine + NH4(+). In terms of biological role, this enzyme scavenges exogenous and endogenous cytidine and 2'-deoxycytidine for UMP synthesis. The chain is Cytidine deaminase from Yersinia pseudotuberculosis serotype O:1b (strain IP 31758).